We begin with the raw amino-acid sequence, 1373 residues long: DNA-directed RNA polymerase subunit beta (1373 aa).

Belongs to the RNA polymerase beta chain family. As to quaternary structure, the RNAP catalytic core consists of 2 alpha, 1 beta, 1 beta' and 1 omega subunit. When a sigma factor is associated with the core the holoenzyme is formed, which can initiate transcription.

The catalysed reaction is RNA(n) + a ribonucleoside 5'-triphosphate = RNA(n+1) + diphosphate. DNA-dependent RNA polymerase catalyzes the transcription of DNA into RNA using the four ribonucleoside triphosphates as substrates. The protein is DNA-directed RNA polymerase subunit beta of Rickettsia felis (strain ATCC VR-1525 / URRWXCal2) (Rickettsia azadi).